The sequence spans 98 residues: DNA-binding protein Fis (98 aa).

Positions 74-93 (QTRAAQMMGINRGTLRKKLK) form a DNA-binding region, H-T-H motif.

The protein belongs to the transcriptional regulatory Fis family. In terms of assembly, homodimer.

Activates ribosomal RNA transcription. Plays a direct role in upstream activation of rRNA promoters. In Proteus hauseri, this protein is DNA-binding protein Fis.